A 751-amino-acid chain; its full sequence is Lanosterol synthase erg7A (751 aa).

The interval 1–22 (MTGGPIASWRTAAQGHLTPDEN) is disordered. The PFTB 1 repeat unit spans residues 147–189 (ATEIKRYLFARQHPEDGGWGLHIEAHSSVFGTCMNYVALRLIG). Asp481 acts as the Proton donor in catalysis. PFTB repeat units follow at residues 508 to 553 (LKDS…MIGY), 585 to 625 (KDKA…ASVG), and 634 to 675 (ARRG…VQTA).

The protein belongs to the terpene cyclase/mutase family.

It localises to the lipid droplet. Its subcellular location is the endoplasmic reticulum membrane. It catalyses the reaction (S)-2,3-epoxysqualene = lanosterol. It functions in the pathway steroid metabolism; ergosterol biosynthesis. Its function is as follows. Lanosterol synthase; part of the third module of ergosterol biosynthesis pathway that includes the late steps of the pathway. ERG7A and ERG7B catalyze the cyclization of (S)-2,3 oxidosqualene to lanosterol, a reaction that forms the sterol core. The third module or late pathway involves the ergosterol synthesis itself through consecutive reactions that mainly occur in the endoplasmic reticulum (ER) membrane. Firstly, the squalene synthase erg9 catalyzes the condensation of 2 farnesyl pyrophosphate moieties to form squalene, which is the precursor of all steroids. Squalene synthase is crucial for balancing the incorporation of farnesyl diphosphate (FPP) into sterol and nonsterol isoprene synthesis. Secondly, squalene is converted into lanosterol by the consecutive action of the squalene epoxidase erg1 and the lanosterol synthase erg7. Then, the delta(24)-sterol C-methyltransferase erg6 methylates lanosterol at C-24 to produce eburicol. Eburicol is the substrate of the sterol 14-alpha demethylase encoded by cyp51A and cyp51B, to yield 4,4,24-trimethyl ergosta-8,14,24(28)-trienol. The C-14 reductase erg24 then reduces the C14=C15 double bond which leads to 4,4-dimethylfecosterol. A sequence of further demethylations at C-4, involving the C-4 demethylation complex containing the C-4 methylsterol oxidases erg25A or erg25B, the sterol-4-alpha-carboxylate 3-dehydrogenase erg26 and the 3-keto-steroid reductase erg27, leads to the production of fecosterol via 4-methylfecosterol. The C-8 sterol isomerase erg2 then catalyzes the reaction which results in unsaturation at C-7 in the B ring of sterols and thus converts fecosterol to episterol. The sterol-C5-desaturase erg3B then catalyzes the introduction of a C-5 double bond in the B ring to produce 5-dehydroepisterol. The 2 other sterol-C5-desaturases, erg3A and erg3C, seem to be less important in ergosterol biosynthesis. The C-22 sterol desaturase erg5 further converts 5-dehydroepisterol into ergosta-5,7,22,24(28)-tetraen-3beta-ol by forming the C-22(23) double bond in the sterol side chain. Finally, ergosta-5,7,22,24(28)-tetraen-3beta-ol is substrate of the C-24(28) sterol reductases erg4A and erg4B to produce ergosterol. Possible alternative sterol biosynthetic pathways might exist from fecosterol to ergosterol, depending on the activities of the erg3 isoforms. The chain is Lanosterol synthase erg7A from Aspergillus fumigatus (strain ATCC MYA-4609 / CBS 101355 / FGSC A1100 / Af293) (Neosartorya fumigata).